A 311-amino-acid polypeptide reads, in one-letter code: Glutaminase (311 aa).

Substrate is bound by residues serine 69, asparagine 120, glutamate 164, asparagine 171, tyrosine 195, tyrosine 247, and valine 265.

This sequence belongs to the glutaminase family. In terms of assembly, homotetramer.

The catalysed reaction is L-glutamine + H2O = L-glutamate + NH4(+). This is Glutaminase from Colwellia psychrerythraea (strain 34H / ATCC BAA-681) (Vibrio psychroerythus).